The sequence spans 622 residues: Meiotic expression up-regulated protein 25 (622 aa).

The polypeptide is Meiotic expression up-regulated protein 25 (meu25) (Schizosaccharomyces pombe (strain 972 / ATCC 24843) (Fission yeast)).